The chain runs to 196 residues: V-type proton ATPase proteolipid subunit (196 aa).

Over M1–P25 the chain is Lumenal. A helical transmembrane segment spans residues V26 to G46. At A47–A72 the chain is on the cytoplasmic side. The chain crosses the membrane as a helical span at residues F73–L93. Over V94–D111 the chain is Lumenal. Residues L112 to V132 traverse the membrane as a helical segment. Residues G133–M150 lie on the Cytoplasmic side of the membrane. Residues M151–L171 form a helical membrane-spanning segment. Over S172 to N196 the chain is Lumenal.

It belongs to the V-ATPase proteolipid subunit family. In terms of assembly, V-ATPase is a heteromultimeric enzyme composed of a peripheral catalytic V1 complex (main components: subunits A, B, C, D, E, and F) attached to an integral membrane V0 proton pore complex (main component: the proteolipid protein; which is present as a hexamer that forms the proton-conducting pore).

The protein resides in the vacuole membrane. In terms of biological role, proton-conducting pore forming subunit of the membrane integral V0 complex of vacuolar ATPase. V-ATPase is responsible for acidifying a variety of intracellular compartments in eukaryotic cells. This is V-type proton ATPase proteolipid subunit (vatP) from Dictyostelium discoideum (Social amoeba).